Reading from the N-terminus, the 122-residue chain is Large ribosomal subunit protein bL19 (122 aa).

This sequence belongs to the bacterial ribosomal protein bL19 family.

Functionally, this protein is located at the 30S-50S ribosomal subunit interface and may play a role in the structure and function of the aminoacyl-tRNA binding site. The protein is Large ribosomal subunit protein bL19 of Chlamydia abortus (strain DSM 27085 / S26/3) (Chlamydophila abortus).